Reading from the N-terminus, the 427-residue chain is C4-dicarboxylate transport protein (427 aa).

Helical transmembrane passes span 5-25, 44-64, 76-96, 142-162, 184-206, 222-242, 307-327, 330-350, and 352-372; these read IFSS…FLGH, LIKM…IAGM, IALL…LCVV, IGAF…LFGF, VIFG…AMAF, LIAC…GSIA, IYLT…LDLF, ITLL…TGSG, and IVLA…LALI.

It belongs to the dicarboxylate/amino acid:cation symporter (DAACS) (TC 2.A.23) family.

The protein localises to the cell inner membrane. Responsible for the transport of dicarboxylates such as succinate, fumarate, and malate from the periplasm across the membrane. This Aeromonas salmonicida (strain A449) protein is C4-dicarboxylate transport protein.